The chain runs to 102 residues: Large ribosomal subunit protein bL21 (102 aa).

This sequence belongs to the bacterial ribosomal protein bL21 family. Part of the 50S ribosomal subunit. Contacts protein L20.

This protein binds to 23S rRNA in the presence of protein L20. The polypeptide is Large ribosomal subunit protein bL21 (Sorangium cellulosum (strain So ce56) (Polyangium cellulosum (strain So ce56))).